A 146-amino-acid polypeptide reads, in one-letter code: Large ribosomal subunit protein uL15 (146 aa).

The interval 1–51 is disordered; that stretch reads MQLNTIKPAEGSKKNRRHVGRGIGSGLGKTAGRGHKGQKSRSGGFHKVGFE. Residues 21–31 are compositionally biased toward gly residues; that stretch reads RGIGSGLGKTA.

Belongs to the universal ribosomal protein uL15 family. Part of the 50S ribosomal subunit.

Binds to the 23S rRNA. The protein is Large ribosomal subunit protein uL15 of Polynucleobacter necessarius subsp. necessarius (strain STIR1).